We begin with the raw amino-acid sequence, 310 residues long: Olfactory receptor 8G3 (310 aa).

At 1–25 (MDPGNHSSVTESILAGLSEQPELQL) the chain is on the extracellular side. Asn-5 carries N-linked (GlcNAc...) asparagine glycosylation. Residues 26–46 (RLFLLFLGICVVTVVGNLGMI) traverse the membrane as a helical segment. The Cytoplasmic portion of the chain corresponds to 47 to 54 (TLIGLSSH). The helical transmembrane segment at 55-75 (LHTPMYYFLSSLSFIDFCHST) threads the bilayer. Residues 76–99 (VITPKMLVNFATEKNIISYPECMA) are Extracellular-facing. Residues Cys-97 and Cys-189 are joined by a disulfide bond. Residues 100 to 120 (QLYLFSIFAIAECHMLAAMAY) traverse the membrane as a helical segment. Over 121–139 (DCYVAICSPLLYNVIMSYH) the chain is Cytoplasmic. Residues 140-160 (HCFWLTVGVYILGILGSTIHT) form a helical membrane-spanning segment. Residues 161–197 (SFMLRLFLCKTNVINHYFCDLFPLLGLSCSSTYINEL) are Extracellular-facing. A helical transmembrane segment spans residues 198–217 (LVLVLSAFNILMPALTILAS). The Cytoplasmic segment spans residues 218–237 (YIFIIASILRIHSTEGRSKA). Residues 238–258 (FSTCSSHILAVAVFFGSAAFM) traverse the membrane as a helical segment. Topologically, residues 259–271 (YLQPSSVSSMDQR) are extracellular. Residues 272–292 (KVSSVFYTTIVPMLNPLIYSL) traverse the membrane as a helical segment. Over 293–310 (RNKDVKLAVKKILHQTAC) the chain is Cytoplasmic.

The protein belongs to the G-protein coupled receptor 1 family.

The protein localises to the cell membrane. In terms of biological role, odorant receptor. The sequence is that of Olfactory receptor 8G3 from Homo sapiens (Human).